We begin with the raw amino-acid sequence, 186 residues long: Potassium-transporting ATPase KdpC subunit (186 aa).

The helical transmembrane segment at 10–30 (LTIITMVLCGFLFPLAITLIG) threads the bilayer.

Belongs to the KdpC family. In terms of assembly, the system is composed of three essential subunits: KdpA, KdpB and KdpC.

It is found in the cell membrane. Part of the high-affinity ATP-driven potassium transport (or Kdp) system, which catalyzes the hydrolysis of ATP coupled with the electrogenic transport of potassium into the cytoplasm. This subunit acts as a catalytic chaperone that increases the ATP-binding affinity of the ATP-hydrolyzing subunit KdpB by the formation of a transient KdpB/KdpC/ATP ternary complex. The sequence is that of Potassium-transporting ATPase KdpC subunit from Staphylococcus aureus (strain MSSA476).